Reading from the N-terminus, the 415-residue chain is Esterase FrsA (415 aa).

This sequence belongs to the FrsA family.

It catalyses the reaction a carboxylic ester + H2O = an alcohol + a carboxylate + H(+). Functionally, catalyzes the hydrolysis of esters. In Vibrio parahaemolyticus serotype O3:K6 (strain RIMD 2210633), this protein is Esterase FrsA.